We begin with the raw amino-acid sequence, 964 residues long: Insulin receptor substrate 1 (964 aa).

Residues 8 to 109 (GMALSGNLKK…WLDKLLVLQR (102 aa)) enclose the PH domain. An IRS-type PTB domain is found at 122 to 236 (YDQVWQVVIQ…SAMSAKTESN (115 aa)). The tract at residues 249 to 268 (LSHEPMRKRSSSANEASKPI) is disordered. Ser-286, Ser-287, and Ser-342 each carry phosphoserine. Residue Tyr-410 is modified to Phosphotyrosine; by INSR. Positions 410–413 (YIPM) match the YXXM motif 1 motif. The interval 527–560 (ASNRSQSSIGKEGSSYGSSANRQKKSTSAPLLSL) is disordered. The segment covering 528 to 560 (SNRSQSSIGKEGSSYGSSANRQKKSTSAPLLSL) has biased composition (polar residues). At Ser-554 the chain carries Phosphoserine. The YXXM motif 2 signature appears at 640-643 (YLEM). Positions 698–712 (EKWREQPSRSEEKKS) are enriched in basic and acidic residues. Residues 698–735 (EKWREQPSRSEEKKSNSPLNDNPFSLKPTNVESKSKSH) form a disordered region. The span at 713–729 (NSPLNDNPFSLKPTNVE) shows a compositional bias: polar residues. At Tyr-907 the chain carries Phosphotyrosine; by INSR. The disordered stretch occupies residues 921–964 (AKYLKRGSRESPPVSACPEDGNTYARIDFDQSDSSSSSSNIFNT). Residues Ser-928 and Ser-931 each carry the phosphoserine modification. Tyr-944 carries the phosphotyrosine; by INSR modification. The span at 952–964 (SDSSSSSSNIFNT) shows a compositional bias: low complexity.

Bindings to phosphatidylinositol 3-kinase and SHP2.

In terms of biological role, activates phosphatidylinositol 3-kinase when bound to the regulatory p85 subunit. May mediate the control of various cellular processes by insulin-like peptides. When phosphorylated by the insulin receptor binds specifically to various cellular proteins containing SH2 domains. Involved in control of cell proliferation, cell size, and body and organ growth throughout development. Also has a role in a signaling pathway controlling the physiological response required to endure periods of low nutrient conditions. Insulin/insulin-like growth factor (IGF) signaling pathway has a role in regulating aging and is necessary in the ovary for vitellogenic maturation. The sequence is that of Insulin receptor substrate 1 from Drosophila sechellia (Fruit fly).